A 251-amino-acid chain; its full sequence is MTKKKLIAGNWKMNGTLGANAALLQALRGGLEAGAYQNVDVAVAVPAAYLAQVQGLVEGSAIALAAQDVSRHEAGAYTGEVSAAMLQEFGVRYVLVGHSERRQYHGETDEQVAEKAQRALAAGITPVVCVGETLAEREAGQTEAVVKRQLAAVIHLNGHCISETVVAYEPVWAIGTGRTATPEQAQQVHAVLRAQLAAASEHADRIRLLYGGSMNAANAAALLAQPDIDGGLVGGASLKAQDFLQIIAAAA.

10-12 (NWK) is a substrate binding site. His98 acts as the Electrophile in catalysis. The active-site Proton acceptor is the Glu169. Substrate contacts are provided by residues Gly175, Ser213, and 234 to 235 (GG).

It belongs to the triosephosphate isomerase family. Homodimer.

It localises to the cytoplasm. The catalysed reaction is D-glyceraldehyde 3-phosphate = dihydroxyacetone phosphate. The protein operates within carbohydrate biosynthesis; gluconeogenesis. It functions in the pathway carbohydrate degradation; glycolysis; D-glyceraldehyde 3-phosphate from glycerone phosphate: step 1/1. In terms of biological role, involved in the gluconeogenesis. Catalyzes stereospecifically the conversion of dihydroxyacetone phosphate (DHAP) to D-glyceraldehyde-3-phosphate (G3P). The polypeptide is Triosephosphate isomerase (Paracidovorax citrulli (strain AAC00-1) (Acidovorax citrulli)).